The following is a 1006-amino-acid chain: Probable sulfite reductase [NADPH] flavoprotein component (1006 aa).

The FAD-binding FR-type domain maps to 622-852; sequence EKVFTVHVRA…AVKTSVMKLP (231 aa). Residues 658–669 and 788–798 contribute to the FAD site; these read YDIGEALGVYGV and IKRREYSISSS.

It depends on FAD as a cofactor. The cofactor is FMN.

It carries out the reaction hydrogen sulfide + 3 NADP(+) + 3 H2O = sulfite + 3 NADPH + 4 H(+). Its pathway is sulfur metabolism; hydrogen sulfide biosynthesis; hydrogen sulfide from sulfite (NADPH route): step 1/1. Functionally, this enzyme catalyzes the 6-electron reduction of sulfite to sulfide. This is one of several activities required for the biosynthesis of L-cysteine from sulfate. This is Probable sulfite reductase [NADPH] flavoprotein component from Schizosaccharomyces pombe (strain 972 / ATCC 24843) (Fission yeast).